Reading from the N-terminus, the 322-residue chain is Polyisoprenyl-teichoic acid--peptidoglycan teichoic acid transferase TagT (322 aa).

At 1 to 19 (MEERSQRRKKKRKLKKWVK) the chain is on the cytoplasmic side. The helical; Signal-anchor for type II membrane protein transmembrane segment at 20 to 40 (VVAGLMAFLVIAAGSVGAYAF) threads the bilayer. The Extracellular portion of the chain corresponds to 41-322 (VKLNNASKEA…KKELQNDLGV (282 aa)).

This sequence belongs to the LytR/CpsA/Psr (LCP) family. Interacts with MreB.

The protein resides in the cell membrane. It functions in the pathway cell wall biogenesis. Functionally, may catalyze the final step in cell wall teichoic acid biosynthesis, the transfer of the anionic cell wall polymers (APs) from their lipid-linked precursor to the cell wall peptidoglycan (PG). The chain is Polyisoprenyl-teichoic acid--peptidoglycan teichoic acid transferase TagT from Bacillus subtilis (strain 168).